We begin with the raw amino-acid sequence, 359 residues long: Peptide chain release factor 1 (359 aa).

Gln-236 carries the N5-methylglutamine modification. Residues 286–305 are disordered; the sequence is KKEMERSTMRKSQIGSGDRS.

This sequence belongs to the prokaryotic/mitochondrial release factor family. Methylated by PrmC. Methylation increases the termination efficiency of RF1.

Its subcellular location is the cytoplasm. Functionally, peptide chain release factor 1 directs the termination of translation in response to the peptide chain termination codons UAG and UAA. This chain is Peptide chain release factor 1, found in Wolbachia pipientis wMel.